Reading from the N-terminus, the 1104-residue chain is MKRSIVTGGGNNDKKFKAQPPPKNNYRGGGDDEEDDEFEEDDDEDEGDEFGEEEDEDDIDVENIIASDSMDIDIQDDGSQQLFLWSRKPVQDLVPHKKPLIFQQLEVDYTEIKEPVPGMPGPKVGPLPAIRLFGVTKEGNSVLCKVHGFLPYFFISCPPGFTEADCKSLKHDLNESMKMSSNQSNEKDIENIVVSIDIEKKKSIMGYNPNPLSDFIRITLILPKFVTRCREIFESGRHHFTIPGQPFRQYQTYESNILFALRFLIDKGITGCSWIELPANTYKLSETPVSTCQIEVDTSLETIISLSDDDSPAPYRILSFDIECAGRKGVFPEPEKDPVIQISNIVKNNGDAEPFIKNIFTLKGCSSIVGAHVIPHKREEDLLREWRKFVIKVDPDVIIGYNIVNFDIPYLISRARQLKIPEFALLGRIKTTISKIKSTRFSSSNLGTRESKEISMPGRTQFDLMQAIQRDHKLTSYSLNNVSAHFLKEQKEDVHFSIISDLQNGTDDDRRRLAVYCIKDAVLPMRLLDKLMILINYTEMARVTGVPLSYLLGRGEGIKVLSQLYRKAMVENFLIPTYKVTGKGEKFQGAIVIEPTPGFYDTPIATLDFTSLYPSIMMAHNLCYSTLLSAEEAKKLPPEIYTTTPFGDHFIKSDTKKGLLPRILEELLSARKKAKDELKNEKDPFKRAVLDGRQLALKISANSVYGFTGARVGKLPCLEISRSVTSFGREMLDKTKKIVEERYTIANGYKHDAVIIYGDTDSVMVKFGVKTVAEAMEMGRDAAKFVTTTFIRPINLDFEKVYYPYLLMAKKKYAGLYWTKPDIHDRMDVKGLEMVRRDTCLLVRNVVSTILKKILIEKDLKSAEEYTKSVISDLLQNRLDLSMLVITKALSKTQYKGKVIHNELARKMRARDPATAPNLGDRVPYVVIQGSKGAPIYEKAEDPLYALEHNILLDCQYYLDKQLKAPLIRIFKPIMSNPDLIFHGEHTRTIAQSTLSDNNKGFFGTLKKKKVCMNCPKELTDTESTTCINCQHKEASLYQTSLEKVTSLETKFSEAWTQCQRCSGSLHQPVLCSNRDCPIFYMRTKVQLDLIEAKKTLNRFNVEW.

A disordered region spans residues 1–60 (MKRSIVTGGGNNDKKFKAQPPPKNNYRGGGDDEEDDEFEEDDDEDEGDEFGEEEDEDDID). Positions 31-60 (DDEEDDEFEEDDDEDEGDEFGEEEDEDDID) are enriched in acidic residues. Residues Cys1012, Cys1015, Cys1027, and Cys1030 each coordinate Zn(2+). The CysA-type zinc finger occupies 1012-1030 (CMNCPKELTDTESTTCINC). The [4Fe-4S] cluster site is built by Cys1059, Cys1062, Cys1072, and Cys1077. The CysB motif motif lies at 1059–1077 (CQRCSGSLHQPVLCSNRDC).

This sequence belongs to the DNA polymerase type-B family. As to quaternary structure, heterotetramer composed of subunits of 125 kDa, 50 kDa, 66 kDa and 12 kDa. The 125 kDa subunit contains the polymerase active site and most likely the active site for the 3'-5' exonuclease activity. The cofactor is [4Fe-4S] cluster.

Its subcellular location is the nucleus. It catalyses the reaction DNA(n) + a 2'-deoxyribonucleoside 5'-triphosphate = DNA(n+1) + diphosphate. Its function is as follows. Possesses two enzymatic activities: DNA synthesis (polymerase) and an exonucleolytic activity that degrades single stranded DNA in the 3'- to 5'-direction. The protein is DNA polymerase delta catalytic subunit (pold1) of Dictyostelium discoideum (Social amoeba).